A 319-amino-acid chain; its full sequence is uncharacterized protein (319 aa).

A signal peptide spans 1–27; that stretch reads MYKKFVPFAVFLFLFFVSFEMMENPHA. One can recognise a NodB homology domain in the interval 130–306; it reads PMVAFLINVA…QIKDKGYALG (177 aa).

The protein belongs to the polysaccharide deacetylase family.

This is an uncharacterized protein from Bacillus subtilis (strain 168).